Consider the following 387-residue polypeptide: 3-ketoacyl-CoA thiolase (387 aa).

C91 functions as the Acyl-thioester intermediate in the catalytic mechanism. Catalysis depends on proton acceptor residues H343 and C373.

Belongs to the thiolase-like superfamily. Thiolase family. As to quaternary structure, heterotetramer of two alpha chains (FadB) and two beta chains (FadA).

It localises to the cytoplasm. It catalyses the reaction an acyl-CoA + acetyl-CoA = a 3-oxoacyl-CoA + CoA. It functions in the pathway lipid metabolism; fatty acid beta-oxidation. Catalyzes the final step of fatty acid oxidation in which acetyl-CoA is released and the CoA ester of a fatty acid two carbons shorter is formed. This Shigella boydii serotype 4 (strain Sb227) protein is 3-ketoacyl-CoA thiolase.